A 566-amino-acid polypeptide reads, in one-letter code: Proline--tRNA ligase (566 aa).

Belongs to the class-II aminoacyl-tRNA synthetase family. ProS type 1 subfamily. As to quaternary structure, homodimer.

Its subcellular location is the cytoplasm. The enzyme catalyses tRNA(Pro) + L-proline + ATP = L-prolyl-tRNA(Pro) + AMP + diphosphate. Its function is as follows. Catalyzes the attachment of proline to tRNA(Pro) in a two-step reaction: proline is first activated by ATP to form Pro-AMP and then transferred to the acceptor end of tRNA(Pro). As ProRS can inadvertently accommodate and process non-cognate amino acids such as alanine and cysteine, to avoid such errors it has two additional distinct editing activities against alanine. One activity is designated as 'pretransfer' editing and involves the tRNA(Pro)-independent hydrolysis of activated Ala-AMP. The other activity is designated 'posttransfer' editing and involves deacylation of mischarged Ala-tRNA(Pro). The misacylated Cys-tRNA(Pro) is not edited by ProRS. This Bacillus cereus (strain AH187) protein is Proline--tRNA ligase.